A 60-amino-acid polypeptide reads, in one-letter code: UPF0434 protein Ssed_2824 (60 aa).

The protein belongs to the UPF0434 family.

The chain is UPF0434 protein Ssed_2824 from Shewanella sediminis (strain HAW-EB3).